A 401-amino-acid polypeptide reads, in one-letter code: Beta-ketoadipyl-CoA thiolase (401 aa).

Cysteine 90 functions as the Acyl-thioester intermediate in the catalytic mechanism. Catalysis depends on proton acceptor residues histidine 357 and cysteine 387.

This sequence belongs to the thiolase-like superfamily. Thiolase family.

The enzyme catalyses succinyl-CoA + acetyl-CoA = 3-oxoadipyl-CoA + CoA. The protein operates within aromatic compound metabolism; beta-ketoadipate pathway; acetyl-CoA and succinyl-CoA from 3-oxoadipate: step 2/2. In terms of biological role, catalyzes thiolytic cleavage of beta-ketoadipyl-CoA to succinyl-CoA and acetyl-CoA. The polypeptide is Beta-ketoadipyl-CoA thiolase (catF) (Acinetobacter baylyi (strain ATCC 33305 / BD413 / ADP1)).